The chain runs to 500 residues: Lysine--tRNA ligase (500 aa).

Residues Glu410 and Glu417 each coordinate Mg(2+).

This sequence belongs to the class-II aminoacyl-tRNA synthetase family. As to quaternary structure, homodimer. It depends on Mg(2+) as a cofactor.

It localises to the cytoplasm. The enzyme catalyses tRNA(Lys) + L-lysine + ATP = L-lysyl-tRNA(Lys) + AMP + diphosphate. The protein is Lysine--tRNA ligase of Mycoplasma capricolum subsp. capricolum (strain California kid / ATCC 27343 / NCTC 10154).